The chain runs to 503 residues: Probable cytosol aminopeptidase (503 aa).

Mn(2+) is bound by residues Lys270 and Asp275. The active site involves Lys282. Asp293, Asp352, and Glu354 together coordinate Mn(2+). The active site involves Arg356.

Belongs to the peptidase M17 family. Mn(2+) serves as cofactor.

The protein localises to the cytoplasm. It carries out the reaction Release of an N-terminal amino acid, Xaa-|-Yaa-, in which Xaa is preferably Leu, but may be other amino acids including Pro although not Arg or Lys, and Yaa may be Pro. Amino acid amides and methyl esters are also readily hydrolyzed, but rates on arylamides are exceedingly low.. The catalysed reaction is Release of an N-terminal amino acid, preferentially leucine, but not glutamic or aspartic acids.. In terms of biological role, presumably involved in the processing and regular turnover of intracellular proteins. Catalyzes the removal of unsubstituted N-terminal amino acids from various peptides. The sequence is that of Probable cytosol aminopeptidase from Shigella dysenteriae serotype 1 (strain Sd197).